The primary structure comprises 297 residues: MGFVKVVKNKAYFKRYQVRFRRRREGKTDYYARKRLVIQDKNKYNTPKYRMIVRVTNRDIICQIAYARIEGDMIVCAAYAHELPKYGVKVGLTNYAAAYCTGLLLARRLLNRFGMDKIYEGQVEVNGGEYNVESIDGQPGAFTCYLDAGLARTTTGNKVFGALKGAVDGGLSIPHSTKRFPGYDSESKEFNAEVHRKHIMGQNVADYMRYLMEEDEDAYKKQFSQYIKNNVTPDMMEEMYKKAHAAIRENPVYEKKPKREVKKKRWNRPKMSLAQKKDRVAQKKASFLRAQERAAES.

Glycine 2 carries the post-translational modification N-acetylglycine. N6-acetyllysine is present on residues lysine 5 and lysine 48. Phosphoserine is present on serine 185. Lysine 220 is modified (N6-acetyllysine; alternate). A Glycyl lysine isopeptide (Lys-Gly) (interchain with G-Cter in SUMO1); alternate cross-link involves residue lysine 220. A Glycyl lysine isopeptide (Lys-Gly) (interchain with G-Cter in SUMO2); alternate cross-link involves residue lysine 220. Threonine 232 is modified (phosphothreonine). Residues 253–297 (YEKKPKREVKKKRWNRPKMSLAQKKDRVAQKKASFLRAQERAAES) form a disordered region. Residues 258–268 (KREVKKKRWNR) are compositionally biased toward basic residues. Position 272 is a phosphoserine (serine 272).

It belongs to the universal ribosomal protein uL18 family. Component of the large ribosomal subunit (LSU). Part of the 5S RNP complex, which is a LSU subcomplex composed of the 5S RNA, RPL5 and RPL11. Component of a hexameric 5S RNP precursor complex, composed of 5S RNA, RRS1, RPF2/BXDC1, RPL5, RPL11 and HEATR3; this complex acts as a precursor for ribosome assembly. Interacts with NVL in an ATP-dependent manner. Interacts with RRP1B. Interacts with IPO5, IPO7 and KPNB1; these interactions may be involved in RPL5 nuclear import for the assembly of ribosomal subunits.

The protein resides in the cytoplasm. Its subcellular location is the nucleus. The protein localises to the nucleolus. Component of the ribosome, a large ribonucleoprotein complex responsible for the synthesis of proteins in the cell. The small ribosomal subunit (SSU) binds messenger RNAs (mRNAs) and translates the encoded message by selecting cognate aminoacyl-transfer RNA (tRNA) molecules. The large subunit (LSU) contains the ribosomal catalytic site termed the peptidyl transferase center (PTC), which catalyzes the formation of peptide bonds, thereby polymerizing the amino acids delivered by tRNAs into a polypeptide chain. The nascent polypeptides leave the ribosome through a tunnel in the LSU and interact with protein factors that function in enzymatic processing, targeting, and the membrane insertion of nascent chains at the exit of the ribosomal tunnel. As part of the 5S RNP/5S ribonucleoprotein particle it is an essential component of the LSU, required for its formation and the maturation of rRNAs. It also couples ribosome biogenesis to p53/TP53 activation. As part of the 5S RNP it accumulates in the nucleoplasm and inhibits MDM2, when ribosome biogenesis is perturbed, mediating the stabilization and the activation of TP53. The sequence is that of Large ribosomal subunit protein uL18 (Rpl5) from Mus musculus (Mouse).